Consider the following 211-residue polypeptide: MYQPDFPTVPFRLGLYPVVDSVEWIERLLESGVRTIQLRIKDKRDEEVEADVIAAIALGRRYNARLFINDYWRLAIKHRAYGVHLGQEDLETTDLKAIQAAGLRLGVSTHDDMEIDVALAAKPSYIALGHVFPTQTKQMPSAPQGLAQLASHIERLADYPTVAIGGISLERAPAVLATGVGSIAVVSAITQAADWREATAELLAIAGVGDE.

4-amino-2-methyl-5-(diphosphooxymethyl)pyrimidine is bound by residues 37–41 and Asn-69; that span reads QLRIK. Residues Asp-70 and Asp-89 each contribute to the Mg(2+) site. Ser-108 is a 4-amino-2-methyl-5-(diphosphooxymethyl)pyrimidine binding site. Residue 134–136 coordinates 2-[(2R,5Z)-2-carboxy-4-methylthiazol-5(2H)-ylidene]ethyl phosphate; the sequence is TQT. A 4-amino-2-methyl-5-(diphosphooxymethyl)pyrimidine-binding site is contributed by Lys-137. 2-[(2R,5Z)-2-carboxy-4-methylthiazol-5(2H)-ylidene]ethyl phosphate-binding positions include Gly-166 and 186 to 187; that span reads VS.

It belongs to the thiamine-phosphate synthase family. Mg(2+) serves as cofactor.

The catalysed reaction is 2-[(2R,5Z)-2-carboxy-4-methylthiazol-5(2H)-ylidene]ethyl phosphate + 4-amino-2-methyl-5-(diphosphooxymethyl)pyrimidine + 2 H(+) = thiamine phosphate + CO2 + diphosphate. It carries out the reaction 2-(2-carboxy-4-methylthiazol-5-yl)ethyl phosphate + 4-amino-2-methyl-5-(diphosphooxymethyl)pyrimidine + 2 H(+) = thiamine phosphate + CO2 + diphosphate. The enzyme catalyses 4-methyl-5-(2-phosphooxyethyl)-thiazole + 4-amino-2-methyl-5-(diphosphooxymethyl)pyrimidine + H(+) = thiamine phosphate + diphosphate. The protein operates within cofactor biosynthesis; thiamine diphosphate biosynthesis; thiamine phosphate from 4-amino-2-methyl-5-diphosphomethylpyrimidine and 4-methyl-5-(2-phosphoethyl)-thiazole: step 1/1. Its function is as follows. Condenses 4-methyl-5-(beta-hydroxyethyl)thiazole monophosphate (THZ-P) and 2-methyl-4-amino-5-hydroxymethyl pyrimidine pyrophosphate (HMP-PP) to form thiamine monophosphate (TMP). This chain is Thiamine-phosphate synthase, found in Salmonella typhimurium (strain LT2 / SGSC1412 / ATCC 700720).